Here is a 417-residue protein sequence, read N- to C-terminus: MTPNSLLSAPSADGVWHHCHLLPDADPARAIRDGALVVEHGRIAWLGAAADLPEAWRGAPRHDANGAWITPGLVDCHTHLVYGGQRADEFAMRLAGAGYEEIARAGGGIVSTVRATRGADEDTLFAQAAARLQPLLAEGVTAIEIKSGYGLNLESERKQLRVARRLGEHFGISVYTTFLGAHALPPEYADRADDYIELVCNTMLPALADEGLVDAVDAFCESIGFSIAQTERVFDAAARHGLRVKLHAEQLSNLGGAALAARHRALSADHLEHLDEAGVAAMAEAGTVAVLLPGAYYFLRDTNLPPIALLRQYGVPMAISTDHNPGTSPVTSLLLMMNMACTLFRLTVPEALAGVTAHAARALGADDRHGRLAVGRVADFALWRIDSPAELAYWFGRNPVATVVRQGRVHAGAGAAA.

Residues H77 and H79 each coordinate Fe(3+). Zn(2+)-binding residues include H77 and H79. Residues R86, Y149, and H182 each contribute to the 4-imidazolone-5-propanoate site. An N-formimidoyl-L-glutamate-binding site is contributed by Y149. H247 is a Fe(3+) binding site. H247 provides a ligand contact to Zn(2+). Q250 is a 4-imidazolone-5-propanoate binding site. Fe(3+) is bound at residue D322. D322 is a binding site for Zn(2+). Residues N324 and G326 each contribute to the N-formimidoyl-L-glutamate site. T327 contacts 4-imidazolone-5-propanoate.

This sequence belongs to the metallo-dependent hydrolases superfamily. HutI family. It depends on Zn(2+) as a cofactor. Requires Fe(3+) as cofactor.

Its subcellular location is the cytoplasm. The enzyme catalyses 4-imidazolone-5-propanoate + H2O = N-formimidoyl-L-glutamate. The protein operates within amino-acid degradation; L-histidine degradation into L-glutamate; N-formimidoyl-L-glutamate from L-histidine: step 3/3. Catalyzes the hydrolytic cleavage of the carbon-nitrogen bond in imidazolone-5-propanoate to yield N-formimidoyl-L-glutamate. It is the third step in the universal histidine degradation pathway. The polypeptide is Imidazolonepropionase (Cupriavidus taiwanensis (strain DSM 17343 / BCRC 17206 / CCUG 44338 / CIP 107171 / LMG 19424 / R1) (Ralstonia taiwanensis (strain LMG 19424))).